The chain runs to 361 residues: Histidinol-phosphate aminotransferase (361 aa).

Residue lysine 219 is modified to N6-(pyridoxal phosphate)lysine.

The protein belongs to the class-II pyridoxal-phosphate-dependent aminotransferase family. Histidinol-phosphate aminotransferase subfamily. In terms of assembly, homodimer. Pyridoxal 5'-phosphate serves as cofactor.

The catalysed reaction is L-histidinol phosphate + 2-oxoglutarate = 3-(imidazol-4-yl)-2-oxopropyl phosphate + L-glutamate. It functions in the pathway amino-acid biosynthesis; L-histidine biosynthesis; L-histidine from 5-phospho-alpha-D-ribose 1-diphosphate: step 7/9. The protein is Histidinol-phosphate aminotransferase of Cereibacter sphaeroides (strain ATCC 17023 / DSM 158 / JCM 6121 / CCUG 31486 / LMG 2827 / NBRC 12203 / NCIMB 8253 / ATH 2.4.1.) (Rhodobacter sphaeroides).